The following is a 1368-amino-acid chain: DNA-directed RNA polymerase subunit beta (1368 aa).

It belongs to the RNA polymerase beta chain family. The RNAP catalytic core consists of 2 alpha, 1 beta, 1 beta' and 1 omega subunit. When a sigma factor is associated with the core the holoenzyme is formed, which can initiate transcription.

It catalyses the reaction RNA(n) + a ribonucleoside 5'-triphosphate = RNA(n+1) + diphosphate. Functionally, DNA-dependent RNA polymerase catalyzes the transcription of DNA into RNA using the four ribonucleoside triphosphates as substrates. The sequence is that of DNA-directed RNA polymerase subunit beta from Burkholderia lata (strain ATCC 17760 / DSM 23089 / LMG 22485 / NCIMB 9086 / R18194 / 383).